The sequence spans 411 residues: Putative competence-damage inducible protein (411 aa).

It belongs to the CinA family.

The chain is Putative competence-damage inducible protein from Caldicellulosiruptor saccharolyticus (strain ATCC 43494 / DSM 8903 / Tp8T 6331).